A 1282-amino-acid polypeptide reads, in one-letter code: Trafficking protein particle complex subunit 8 (1282 aa).

The interval 245–287 (TDAIAPGPNGASNQQSPSSPTSSVATISSTMPAVGSVSPNSHP) is disordered. Low complexity predominate over residues 255 to 273 (ASNQQSPSSPTSSVATISS).

In terms of biological role, plays a role in endoplasmic reticulum to Golgi apparatus trafficking at a very early stage. Involved in collagen secretion. In Caenorhabditis elegans, this protein is Trafficking protein particle complex subunit 8.